A 381-amino-acid chain; its full sequence is Lysophosphatidylserine lipase ABHD12 (381 aa).

Residues 1 to 58 (MRKRNESVTVEHERAAAAPAPLDKGCSLRHSLRLPAADTGMKRPLGRRHGLWFRLRRL) are Cytoplasmic-facing. A helical membrane pass occupies residues 59 to 79 (IIWLLGVYIAIPFLVKLCPAI). The Extracellular segment spans residues 80–381 (QAKLVFLNFV…LGIPEHEHHH (302 aa)). N-linked (GlcNAc...) asparagine glycosylation is present at Asn-106. The active-site Nucleophile is the Ser-229. Active-site charge relay system residues include Asp-316 and His-355.

This sequence belongs to the serine esterase family.

It localises to the endoplasmic reticulum membrane. The catalysed reaction is 1-(9Z-octadecenoyl)-sn-glycero-3-phospho-L-serine + H2O = sn-glycero-3-phospho-L-serine + (9Z)-octadecenoate + H(+). It carries out the reaction 1-(9Z-octadecenoyl)-sn-glycero-3-phospho-(1'-sn-glycerol) + H2O = sn-glycero-3-phospho-(1'-sn-glycerol) + (9Z)-octadecenoate + H(+). The enzyme catalyses 1-(9Z-octadecenoyl)-sn-glycero-3-phospho-(1D-myo-inositol) + H2O = sn-glycero-3-phospho-1D-myo-inositol + (9Z)-octadecenoate + H(+). It catalyses the reaction 1-(9Z-octadecenoyl)-sn-glycero-3-phosphoethanolamine + H2O = sn-glycero-3-phosphoethanolamine + (9Z)-octadecenoate + H(+). The catalysed reaction is 1-(9Z-octadecenoyl)-sn-glycero-3-phosphocholine + H2O = 1-(9Z-octadecenoyl)-sn-glycerol + phosphocholine + H(+). It carries out the reaction 2-(9Z-octadecenoyl)-glycerol + H2O = glycerol + (9Z)-octadecenoate + H(+). The enzyme catalyses 1-hexadecanoyl-sn-glycero-3-phospho-L-serine + H2O = sn-glycero-3-phospho-L-serine + hexadecanoate + H(+). It catalyses the reaction 2-(5Z,8Z,11Z,14Z-eicosatetraenoyl)-glycerol + H2O = glycerol + (5Z,8Z,11Z,14Z)-eicosatetraenoate + H(+). The catalysed reaction is Hydrolyzes glycerol monoesters of long-chain fatty acids.. It carries out the reaction 1-decanoylglycerol + H2O = decanoate + glycerol + H(+). The enzyme catalyses 1-dodecanoylglycerol + H2O = dodecanoate + glycerol + H(+). It catalyses the reaction 1-tetradecanoylglycerol + H2O = tetradecanoate + glycerol + H(+). The catalysed reaction is 2-hexadecanoylglycerol + H2O = glycerol + hexadecanoate + H(+). It carries out the reaction 1-(9Z-octadecenoyl)-glycerol + H2O = glycerol + (9Z)-octadecenoate + H(+). The enzyme catalyses 2-(9Z,12Z-octadecadienoyl)-glycerol + H2O = (9Z,12Z)-octadecadienoate + glycerol + H(+). It catalyses the reaction 1-(5Z,8Z,11Z,14Z-eicosatetraenoyl)-glycerol + H2O = glycerol + (5Z,8Z,11Z,14Z)-eicosatetraenoate + H(+). The catalysed reaction is 1-(9Z,12Z-octadecadienoyl)-glycerol + H2O = (9Z,12Z)-octadecadienoate + glycerol + H(+). It carries out the reaction 1-hexadecanoylglycerol + H2O = glycerol + hexadecanoate + H(+). The enzyme catalyses 1-octadecanoylglycerol + H2O = octadecanoate + glycerol + H(+). It catalyses the reaction 1-octadecanoyl-2-(9,10-epoxyoctadecanoyl)-sn-glycero-3-phospho-L-serine + H2O = 9,10-epoxyoctadecanoate + 1-octadecanoyl-sn-glycero-3-phosphoserine + H(+). The catalysed reaction is 1-octadecanoyl-2-(10-hydroxyoctadecanoyl)-sn-glycero-3-phospho-L-serine + H2O = 1-octadecanoyl-sn-glycero-3-phosphoserine + 10-hydroxyoctadecanoate + H(+). It carries out the reaction 1-hexadecanoyl-2-(10-hydroxyoctadecanoyl)-sn-glycero-3-phospho-L-serine + H2O = 10-hydroxyoctadecanoate + 1-hexadecanoyl-sn-glycero-3-phospho-L-serine + H(+). In terms of biological role, lysophosphatidylserine (LPS) lipase that mediates the hydrolysis of lysophosphatidylserine, a class of signaling lipids that regulates immunological and neurological processes. Represents a major lysophosphatidylserine lipase in the brain, thereby playing a key role in the central nervous system. Also able to hydrolyze oxidized phosphatidylserine; oxidized phosphatidylserine is produced in response to severe inflammatory stress and constitutes a proapoptotic 'eat me' signal. Also has monoacylglycerol (MAG) lipase activity: hydrolyzes 2-arachidonoylglycerol (2-AG), thereby acting as a regulator of endocannabinoid signaling pathways. Has a strong preference for very-long-chain lipid substrates; substrate specificity is likely due to improved catalysis and not improved substrate binding. The chain is Lysophosphatidylserine lipase ABHD12 from Gallus gallus (Chicken).